Consider the following 263-residue polypeptide: 3-deoxy-manno-octulosonate cytidylyltransferase (263 aa).

Belongs to the KdsB family.

The protein localises to the cytoplasm. The enzyme catalyses 3-deoxy-alpha-D-manno-oct-2-ulosonate + CTP = CMP-3-deoxy-beta-D-manno-octulosonate + diphosphate. It functions in the pathway nucleotide-sugar biosynthesis; CMP-3-deoxy-D-manno-octulosonate biosynthesis; CMP-3-deoxy-D-manno-octulosonate from 3-deoxy-D-manno-octulosonate and CTP: step 1/1. Its pathway is bacterial outer membrane biogenesis; lipopolysaccharide biosynthesis. Its function is as follows. Activates KDO (a required 8-carbon sugar) for incorporation into bacterial lipopolysaccharide in Gram-negative bacteria. The sequence is that of 3-deoxy-manno-octulosonate cytidylyltransferase from Burkholderia mallei (strain NCTC 10229).